A 129-amino-acid chain; its full sequence is Protein Turandot A1/2 (129 aa).

A signal peptide spans 1-21 (MNSSTALMCFALLLISPLCLG). Residue N49 is glycosylated (N-linked (GlcNAc...) asparagine).

It belongs to the Turandot family.

It is found in the secreted. Functionally, a humoral factor that plays a role in stress tolerance; gives increased resistance to the lethal effects of bacterial challenge and stress. Regulated by the JAK/STAT pathway and NF-KB-like Relish pathway in the fat body, upd3 in the hemocytes and Mekk1 in response to septic injury and consequent immune response. The chain is Protein Turandot A1/2 (TotA1) from Drosophila sechellia (Fruit fly).